A 669-amino-acid chain; its full sequence is MYGMLYESVQHYIQQEYGMETWRKVCQIVDCKHQSFKTHQIYPDKLMPDFAAALSASTGESFDFCMNFFGRCFVRFFSNFGYDKMIRSTGRYFCDFLQSIDNIHVQMRFTYPKMKSPSMQLTNMDDDGAVILYRSGRTGMSKYLIGQMTEVAKEFYGLDMTAYVLESQNDICGGTAGPIKLTEGPLTVIVKYRLDFDNRDYMAKRVNVIAHPSQLKMPSVDLNVFLELFPFTIVLDHDMKITLAGEKIVETWILHNPGVNPKTFIGSHILERFKCRRPKDTQIQWETILQMRTVLFEFELIRTGHNRAAYDAALNFDFENFDEASSLNEAQAMALASAKEFSAENAKEEAAAAATSKDEIDPATGQRRHSVGLRSILLKGQMFYIKDVDSLIFLCSPLIENLDELHGIGLYLNDLNPHGLSRELVMAGWQHCSKLEIMFEKEEQRSDELEKSLELADSWKRQGDELLYSMIPRPIAERMRKSEEHVCQSFEEVSVIFIEVMNIYDSGSNNIQDAMQAVTTLNKVFSALDEEIISPFVYKVETVGMVYMAVSGAPDVNPLHAEHACDLALRVMKKVKAHALPGVAIRVGINSGPVVAGVVGMKVPRYCLFGDTVNTASRMESSSDPWMIQLSNYTALKVQKVGYKVEARGFVKVKGKGEMETYWLLEGPE.

His-104 is a binding site for heme. Positions 430–458 (QHCSKLEIMFEKEEQRSDELEKSLELADS) form a coiled coil. The Guanylate cyclase domain occupies 494-620 (SVIFIEVMNI…DTVNTASRME (127 aa)).

It belongs to the adenylyl cyclase class-4/guanylyl cyclase family. In terms of assembly, heterodimer; with Gyc88E, in the presence of magnesium or manganese. Requires heme as cofactor. Expressed in embryos in a segmental pattern in the ventral nerve cord (VNC) and in the brain, beginning at stage 13 and continuing through to stage 17. Colocalized with Gyc-89Db in several peripheral neurons that innervate trachea, basiconical sensilla and the sensory cones in the posterior segments of the embryo. Expression in wandering 3rd instar larvae is most prominent in a small cluster of cells located in the anterior medial region of each brain lobe. In the VNC, expression is found in scattered cells both laterally and at the midline.

The protein resides in the cytoplasm. It carries out the reaction GTP = 3',5'-cyclic GMP + diphosphate. With respect to regulation, probably not activated by nitric oxide (NO). Heterodimer exhibits some stimulation, compounds (SIN-1 and two of the NONOates) that were ineffective at stimulating Gyc-88E homodimer did stimulate the heterodimer. Functionally, heterodimers with Gyc88E are activated in response to changing oxygen concentrations, alerting flies to hypoxic environments. Under normal oxygen concentrations, oxygen binds to the heme group and results in low levels of guanylyl cyclase activity. When exposed to reduced oxygen concentrations, the oxygen dissociates from the heme group resulting in activation of the enzyme. The sequence is that of Soluble guanylate cyclase 89Db from Drosophila melanogaster (Fruit fly).